A 797-amino-acid polypeptide reads, in one-letter code: Peroxisome proliferator-activated receptor gamma coactivator 1-alpha (797 aa).

Position 77 is an N6-acetyllysine (K77). Residues 101–138 form a disordered region; the sequence is EDGLPSFDALTDGAVTTDNEASPSSMPDGTPPPQEAEE. Positions 114–127 are enriched in polar residues; sequence AVTTDNEASPSSMP. Positions 142-146 match the LXXLL motif motif; sequence LKKLL. At K144 the chain carries N6-acetyllysine. T177 carries the phosphothreonine; by AMPK modification. K183 is modified (N6-acetyllysine). The segment at 212–276 is disordered; the sequence is YLTTNDDPPH…NDPKGSPFEN (65 aa). Over residues 218-236 the composition is skewed to basic and acidic residues; it reads DPPHTKPTENRNSSRDKCA. Positions 243–259 are enriched in polar residues; sequence TQPQSQHAQAKPTTLSL. N6-acetyllysine is present on residues K253, K270, K277, K320, K346, K412, K441, and K450. The segment at 289–376 is disordered; it reads GTAGLTPPTT…HEERKTKRPS (88 aa). Residues 292 to 338 form an interaction with PPARG region; that stretch reads GLTPPTTPPHKANQDNPFKASPKLKPSCKTVVPPPTKRARYSECSGT. The tract at residues 349-797 is mediates interaction with RNF34; sequence EQSELYAQLS…LKEAQRSLRR (449 aa). A Phosphoserine; by AMPK modification is found at S538. Disordered stretches follow at residues 543–598, 612–634, and 648–668; these read NSPC…SSRS, HRNSPLYVRSRSRSPYSRRPRYD, and EYRKEHEKRESERAKQRERQK. Positions 562-577 are enriched in basic residues; sequence QRMRSRSRSFSRHRSC. Low complexity predominate over residues 578 to 598; it reads SRSPYSRSRSRSPGSRSSSRS. The span at 621–630 shows a compositional bias: basic residues; sequence SRSRSPYSRR. In terms of domain architecture, RRM spans 676-752; the sequence is RVIYVGKIRP…TDFELYFCGR (77 aa). An N6-acetyllysine mark is found at K757 and K778.

Homooligomer. Interacts with MYBBP1A; inhibits MYBBP1A transcriptional activation. Interacts with PRDM16, LPIN1 and PML. Interacts (via LXXLL motif) with RORA and RORC (via AF-2 motif); activates RORA and RORC transcriptional activation. Interacts with LRPPRC. Interacts with FOXO1. Interacts with NR5A2. Post-translationally, phosphorylation by AMPK in skeletal muscle increases activation of its own promoter. Phosphorylated by CLK2. In terms of processing, heavily acetylated by KAT2A/GCN5 under conditions of high nutrients, leading to inactivation of PPARGC1A. Deacetylated by SIRT1 in low nutrients/high NAD conditions, leading to its activation. Ubiquitinated. Ubiquitination by RNF34 induces proteasomal degradation. As to expression, white quadriceps and red tibialis anterior (TA) muscles, liver, kidney and brown adipose tissue (at protein level). Skeletal muscle, brown adipose tissue, heart, kidney and brain.

Its subcellular location is the nucleus. It localises to the PML body. Its function is as follows. Transcriptional coactivator for steroid receptors and nuclear receptors. Greatly increases the transcriptional activity of PPARG and thyroid hormone receptor on the uncoupling protein promoter. Can regulate key mitochondrial genes that contribute to the program of adaptive thermogenesis. Plays an essential role in metabolic reprogramming in response to dietary availability through coordination of the expression of a wide array of genes involved in glucose and fatty acid metabolism. Acts as a key regulator of gluconeogenesis: stimulates hepatic gluconeogenesis by increasing the expression of gluconeogenic enzymes, and acting together with FOXO1 to promote the fasting gluconeogenic program. Induces the expression of PERM1 in the skeletal muscle in an ESRRA-dependent manner. Also involved in the integration of the circadian rhythms and energy metabolism. Required for oscillatory expression of clock genes, such as BMAL1 and NR1D1, through the coactivation of RORA and RORC, and metabolic genes, such as PDK4 and PEPCK. In Mus musculus (Mouse), this protein is Peroxisome proliferator-activated receptor gamma coactivator 1-alpha (Ppargc1a).